The sequence spans 153 residues: Aspartate carbamoyltransferase regulatory chain (153 aa).

Positions 109, 114, 138, and 141 each coordinate Zn(2+).

Belongs to the PyrI family. As to quaternary structure, contains catalytic and regulatory chains. The cofactor is Zn(2+).

In terms of biological role, involved in allosteric regulation of aspartate carbamoyltransferase. This chain is Aspartate carbamoyltransferase regulatory chain, found in Shigella flexneri serotype 5b (strain 8401).